Reading from the N-terminus, the 108-residue chain is UPF0235 protein Rpal_0418 (108 aa).

The protein belongs to the UPF0235 family.

The protein is UPF0235 protein Rpal_0418 of Rhodopseudomonas palustris (strain TIE-1).